The primary structure comprises 390 residues: Probable inactive secreted aspartyl protease (390 aa).

An N-terminal signal peptide occupies residues 1–20 (MQLTIKALVGILTTISAATA). A propeptide spans 21–69 (VSFDMENLGAEKRGVSGEELHMLHGNEVLARFANGVYPEVANGTRVSKR) (removed in mature form). Residue Asn-62 is glycosylated (N-linked (GlcNAc...) asparagine). The Peptidase A1 domain occupies 86-388 (WAVKAKIGSN…KFDSNEMQIA (303 aa)). Catalysis depends on residues Asp-104 and Asp-273. The cysteines at positions 313 and 346 are disulfide-linked.

Belongs to the peptidase A1 family.

The protein resides in the secreted. Functionally, probable inactive secreted aspartyl protease. May promote an inflammatory immune response in the host when the host skin barrier is breached. Has no detectable protease activity in vitro on fluorogenic substrates, a peptide library, or with the general protease substrate casein. The presence of the enzyme also does not affect the activity of the secreted aspartyl protease SAP1. This chain is Probable inactive secreted aspartyl protease, found in Malassezia globosa (strain ATCC MYA-4612 / CBS 7966) (Dandruff-associated fungus).